A 498-amino-acid polypeptide reads, in one-letter code: Aminotransferase swnA (498 aa).

It belongs to the class-I pyridoxal-phosphate-dependent aminotransferase family. The cofactor is pyridoxal 5'-phosphate.

It functions in the pathway mycotoxin biosynthesis. Its function is as follows. Aminotransferase; part of the gene cluster that mediates the biosynthesis of swainsonine (SW), a cytotoxic fungal alkaloid and a potential cancer therapy drug. Swainsonine production occurs via a multibranched pathway and is dispensable for fungal colonization of plants and infection of insect hosts. The first step of swainsonine biosynthesis is the production of the precursor pipecolic acid (PA) via conversion of L-lysine (Lys) to 1-piperideine-6-carboxylate (P6C) by the aminotransferase swnA, the latter being further reduced to PA by the reductase swnR. PA can be converted from lysine by both the SW biosynthetic cluster and the unclustered genes such as lysine cyclodeaminase. The PKS-NRPS hybrid synthetase swnK uptakes and condensates PA and malonyl-CoA with and without skipping of the ketoreductase (KR) domain in order to produce 3 intermediates, 1-oxoindolizidine, (1S)-1-hydroxyindolizin, and (1R)-1-hydroxyindolizine; with the transisomer (1S)-1-hydroxyindolizin being predominant. The terminal thioester reductase (TE) domain of swnK is involved in reduction of the thioester bond to release the intermediate aldehydes. The oxidoreductase swnN could contribute to the reduction of 1-oxoindolizidine to (1S)-1-hydroxyindolizin and (1R)-1-hydroxyindolizine, contributing to the major route of SW production. The dioxygenase swnH2 would be responsible for the oxidization of (1R)-1-hydroxyindolizine into (1R,2S)-1,2-dihydroxyindolizine and of (1S)-1-hydroxyindolizin to yield both (1R,2S)-1,2-dihydroxyindolizine and (1S,2S)-1,2-dihydroxyindolizine. The dioxygenase swnH1 then performs the conversion of the 1,2-dihydroxyindolizine epimers to SW. This Metarhizium robertsii (strain ARSEF 23 / ATCC MYA-3075) (Metarhizium anisopliae (strain ARSEF 23)) protein is Aminotransferase swnA.